A 407-amino-acid polypeptide reads, in one-letter code: Methylthioribose kinase (407 aa).

ATP is bound by residues N40, K57, and 111-113; that span reads EDL. Position 229 (D229) interacts with substrate. 246–248 contacts ATP; that stretch reads DAE. Residue R344 participates in substrate binding.

Belongs to the methylthioribose kinase family. In terms of assembly, homodimer.

It catalyses the reaction 5-(methylsulfanyl)-D-ribose + ATP = 5-(methylsulfanyl)-alpha-D-ribose 1-phosphate + ADP + H(+). The protein operates within amino-acid biosynthesis; L-methionine biosynthesis via salvage pathway; S-methyl-5-thio-alpha-D-ribose 1-phosphate from S-methyl-5'-thioadenosine (hydrolase route): step 2/2. Its function is as follows. Catalyzes the phosphorylation of methylthioribose into methylthioribose-1-phosphate. The polypeptide is Methylthioribose kinase (Yersinia pestis bv. Antiqua (strain Angola)).